The following is a 768-amino-acid chain: Phosphoribosylformylglycinamidine synthase subunit PurL (768 aa).

H46 is an active-site residue. The ATP site is built by Y49 and K88. E90 contributes to the Mg(2+) binding site. Substrate is bound by residues 91–94 (SHNH) and R113. The active-site Proton acceptor is the H92. D114 contacts Mg(2+). Position 237 (Q237) interacts with substrate. D265 lines the Mg(2+) pocket. 309–311 (ESQ) contacts substrate. Residues D514 and G551 each coordinate ATP. N552 is a Mg(2+) binding site. Residue S554 participates in substrate binding.

This sequence belongs to the FGAMS family. Monomer. Part of the FGAM synthase complex composed of 1 PurL, 1 PurQ and 2 PurS subunits.

It localises to the cytoplasm. It carries out the reaction N(2)-formyl-N(1)-(5-phospho-beta-D-ribosyl)glycinamide + L-glutamine + ATP + H2O = 2-formamido-N(1)-(5-O-phospho-beta-D-ribosyl)acetamidine + L-glutamate + ADP + phosphate + H(+). Its pathway is purine metabolism; IMP biosynthesis via de novo pathway; 5-amino-1-(5-phospho-D-ribosyl)imidazole from N(2)-formyl-N(1)-(5-phospho-D-ribosyl)glycinamide: step 1/2. Functionally, part of the phosphoribosylformylglycinamidine synthase complex involved in the purines biosynthetic pathway. Catalyzes the ATP-dependent conversion of formylglycinamide ribonucleotide (FGAR) and glutamine to yield formylglycinamidine ribonucleotide (FGAM) and glutamate. The FGAM synthase complex is composed of three subunits. PurQ produces an ammonia molecule by converting glutamine to glutamate. PurL transfers the ammonia molecule to FGAR to form FGAM in an ATP-dependent manner. PurS interacts with PurQ and PurL and is thought to assist in the transfer of the ammonia molecule from PurQ to PurL. The polypeptide is Phosphoribosylformylglycinamidine synthase subunit PurL (Synechocystis sp. (strain ATCC 27184 / PCC 6803 / Kazusa)).